Here is a 360-residue protein sequence, read N- to C-terminus: uncharacterized protein (360 aa).

This is an uncharacterized protein from Ostreid herpesvirus 1 (isolate France) (OsHV-1).